The primary structure comprises 378 residues: Glycerate kinase (378 aa).

Belongs to the glycerate kinase type-1 family.

The catalysed reaction is (R)-glycerate + ATP = (2R)-3-phosphoglycerate + ADP + H(+). The chain is Glycerate kinase (glxK) from Haemophilus influenzae (strain ATCC 51907 / DSM 11121 / KW20 / Rd).